Here is a 660-residue protein sequence, read N- to C-terminus: Phosphatidylinositol-3-phosphate phosphatase MTMR7 (660 aa).

A Myotubularin phosphatase domain is found at Gly126–Tyr504. Asn250, Asn275, and Ile276 together coordinate a 1,2-diacyl-sn-glycero-3-phospho-(1D-myo-inositol-3-phosphate). Cys338 (phosphocysteine intermediate) is an active-site residue. A 1,2-diacyl-sn-glycero-3-phospho-(1D-myo-inositol-3-phosphate) is bound by residues Ser339, Asp340, Gly341, Trp342, Asp343, Arg344, and Arg384. A coiled-coil region spans residues Leu521–Asn551. The segment at Lys554 to Ala660 is disordered. The span at Ser566–Gln596 shows a compositional bias: polar residues. Thr578 carries the phosphothreonine modification. A compositionally biased stretch (basic and acidic residues) spans Ala641–Asp653.

It belongs to the protein-tyrosine phosphatase family. Non-receptor class myotubularin subfamily. In terms of assembly, heterodimer (via C-terminus) with MTMR9 (via coiled coil domain); the interaction enhances MTMR7 catalytic activity. Does not homodimerize. Interacts with RAB1B (in GDP-bound form). In terms of tissue distribution, expressed specifically in brain.

It is found in the cytoplasm. The protein localises to the endomembrane system. It carries out the reaction a 1,2-diacyl-sn-glycero-3-phospho-(1D-myo-inositol-3-phosphate) + H2O = a 1,2-diacyl-sn-glycero-3-phospho-(1D-myo-inositol) + phosphate. It catalyses the reaction 1D-myo-inositol 1,3-bisphosphate + H2O = 1D-myo-inositol 1-phosphate + phosphate. Its activity is regulated as follows. Interaction with MTMR9 increases phosphatase activity. Lipid phosphatase that specifically dephosphorylates the D-3 position of phosphatidylinositol 3-phosphate (PtdIns(3)P) and inositol 1,3-bisphosphate (Ins(1,3)P2). This is Phosphatidylinositol-3-phosphate phosphatase MTMR7 from Homo sapiens (Human).